Reading from the N-terminus, the 84-residue chain is Small ribosomal subunit protein uS17 (84 aa).

The protein belongs to the universal ribosomal protein uS17 family. As to quaternary structure, part of the 30S ribosomal subunit.

Its function is as follows. One of the primary rRNA binding proteins, it binds specifically to the 5'-end of 16S ribosomal RNA. This chain is Small ribosomal subunit protein uS17, found in Alkaliphilus metalliredigens (strain QYMF).